We begin with the raw amino-acid sequence, 407 residues long: DNA primase DnaG (407 aa).

Residues 172–248 (DWIIVVEGRA…HIDYVARAPP (77 aa)) enclose the Toprim domain. Mg(2+) is bound by residues Glu-178, Asp-222, and Asp-224. A disordered region spans residues 279-304 (AGAEKTEAAAPPPQQPTAPPAAPSQQ). Over residues 288–300 (APPPQQPTAPPAA) the composition is skewed to pro residues.

The protein belongs to the archaeal DnaG primase family. Forms a ternary complex with MCM helicase and DNA. Component of the archaeal exosome complex. It depends on Mg(2+) as a cofactor.

It catalyses the reaction ssDNA + n NTP = ssDNA/pppN(pN)n-1 hybrid + (n-1) diphosphate.. Its function is as follows. RNA polymerase that catalyzes the synthesis of short RNA molecules used as primers for DNA polymerase during DNA replication. Also part of the exosome, which is a complex involved in RNA degradation. Acts as a poly(A)-binding protein that enhances the interaction between heteromeric, adenine-rich transcripts and the exosome. The polypeptide is DNA primase DnaG (Pyrobaculum calidifontis (strain DSM 21063 / JCM 11548 / VA1)).